Reading from the N-terminus, the 267-residue chain is Extensin (267 aa).

Positions 1-267 (MCPAFSIFFN…HTPSPPPPYY (267 aa)) are disordered. Repeats lie at residues 18–33 (PPTY…PKPT), 34–54 (PPTY…PKPT), 55–70 (PPTY…PKPT), 71–91 (PPTY…PKPT), 92–107 (PPTY…PKPT), 108–128 (PPTY…PKPT), 129–144 (PPTY…PKPT), 145–160 (PPTY…PKPT), 161–179 (PPTY…PKPT), 180–195 (PPTY…PKPT), 196–211 (PPTY…PKPT), 212–232 (PPTY…PKPT), and 233–253 (PPTY…YTPT). Positions 18-253 (PPTYTPSPKP…ATKPPTYTPT (236 aa)) are highly repetitive. Over residues 20–267 (TYTPSPKPPT…HTPSPPPPYY (248 aa)) the composition is skewed to pro residues. The interval 261–265 (SPPPP) is extensin repetitive element.

Post-translationally, hydroxylated on proline residues in the S-P-P-P-P repeat. In terms of processing, O-glycosylated on hydroxyprolines. In terms of tissue distribution, mainly in the coleoptile node and root tip.

It is found in the secreted. The protein localises to the primary cell wall. Its function is as follows. Structural component in primary cell wall. This Zea mays (Maize) protein is Extensin (HRGP).